The following is a 202-amino-acid chain: MHVTQSSSAITPGQTAELYPGDIKSVLLTAEQIQARIAELGEQIGNDYRELSATTGQDLLMITVLKGAVLFVTDLARAIPVPTQFEFMAVSSYGSSTSSSGVVRILKDLDRDIHGRDVLIVEDVVDSGLTLSWLSRNLTSRNPRSLRVCTLLRKPDAVHANVEIAYVGFDIPNDFVVGYGLDYDERYRDLSYIGTLDPRVYQ.

Diphosphate is bound by residues K66 and G67. Mg(2+) is bound by residues E122 and D123. Residue D126 is the Proton acceptor of the active site. GMP contacts are provided by residues K154, F175 to V176, and D182. Diphosphate is bound at residue R188.

It belongs to the purine/pyrimidine phosphoribosyltransferase family. Mg(2+) serves as cofactor.

It is found in the cytoplasm. It carries out the reaction IMP + diphosphate = hypoxanthine + 5-phospho-alpha-D-ribose 1-diphosphate. The enzyme catalyses GMP + diphosphate = guanine + 5-phospho-alpha-D-ribose 1-diphosphate. Its pathway is purine metabolism; IMP biosynthesis via salvage pathway; IMP from hypoxanthine: step 1/1. It functions in the pathway purine metabolism; GMP biosynthesis via salvage pathway; GMP from guanine: step 1/1. Purine salvage pathway enzyme that catalyzes the transfer of the ribosyl-5-phosphate group from 5-phospho-alpha-D-ribose 1-diphosphate (PRPP) to the N9 position of the 6-oxopurines hypoxanthine and guanine to form the corresponding ribonucleotides IMP (inosine 5'-monophosphate) and GMP (guanosine 5'-monophosphate), with the release of PPi. The protein is Hypoxanthine-guanine phosphoribosyltransferase (hpt) of Mycobacterium tuberculosis (strain CDC 1551 / Oshkosh).